The primary structure comprises 107 residues: Thioredoxin (107 aa).

The Thioredoxin domain occupies 2-107 (SVEAVVKQVD…GIRELIQANA (106 aa)). Active-site nucleophile residues include C34 and C37. C34 and C37 form a disulfide bridge.

This sequence belongs to the thioredoxin family.

In terms of biological role, participates in various redox reactions through the reversible oxidation of its active center dithiol to a disulfide and catalyzes dithiol-disulfide exchange reactions. The polypeptide is Thioredoxin (TRX) (Echinococcus granulosus (Hydatid tapeworm)).